We begin with the raw amino-acid sequence, 222 residues long: Pyridoxal phosphate homeostasis protein (222 aa).

The residue at position 35 (lysine 35) is an N6-(pyridoxal phosphate)lysine.

Belongs to the pyridoxal phosphate-binding protein YggS/PROSC family.

Functionally, pyridoxal 5'-phosphate (PLP)-binding protein, which is involved in PLP homeostasis. The sequence is that of Pyridoxal phosphate homeostasis protein from Helicobacter pylori (strain J99 / ATCC 700824) (Campylobacter pylori J99).